The following is a 126-amino-acid chain: MARIAGVEIPRNKRVDVALTYIYGIGKARAKEALEKTGINPATRVKDLTEAEVVRLREYVENTWKLEGELRAEVAANIKRLMDIGCYRGLRHRRGLPVRGQRTRTNARTRKGPRKTVAGKKKAPRK.

Residues 95–126 (GLPVRGQRTRTNARTRKGPRKTVAGKKKAPRK) are disordered.

Belongs to the universal ribosomal protein uS13 family. As to quaternary structure, part of the 30S ribosomal subunit. Forms a loose heterodimer with protein S19. Forms two bridges to the 50S subunit in the 70S ribosome.

Its function is as follows. Located at the top of the head of the 30S subunit, it contacts several helices of the 16S rRNA. In the 70S ribosome it contacts the 23S rRNA (bridge B1a) and protein L5 of the 50S subunit (bridge B1b), connecting the 2 subunits; these bridges are implicated in subunit movement. Contacts the tRNAs in the A and P-sites. The polypeptide is Small ribosomal subunit protein uS13 (rpsM) (Thermus thermophilus (strain ATCC BAA-163 / DSM 7039 / HB27)).